We begin with the raw amino-acid sequence, 359 residues long: Type-1 angiotensin II receptor (359 aa).

At methionine 1–asparagine 25 the chain is on the extracellular side. Residue asparagine 4 is glycosylated (N-linked (GlcNAc...) asparagine). Positions 15 and 17 each coordinate angiotensin II. Cystine bridges form between cysteine 18–cysteine 274 and cysteine 101–cysteine 180. Residues tyrosine 26 to phenylalanine 55 traverse the membrane as a helical segment. At tyrosine 56 to threonine 61 the chain is on the cytoplasmic side. The chain crosses the membrane as a helical span at residues valine 62–alanine 89. Over methionine 90–asparagine 98 the chain is Extracellular. Residues tyrosine 99–aspartate 125 traverse the membrane as a helical segment. Topologically, residues arginine 126–threonine 141 are cytoplasmic. The helical transmembrane segment at methionine 142 to isoleucine 165 threads the bilayer. Residues histidine 166–threonine 190 are Extracellular-facing. Angiotensin II is bound at residue arginine 167. Asparagine 176 is a glycosylation site (N-linked (GlcNAc...) asparagine). Positions 182, 183, and 184 each coordinate angiotensin II. Asparagine 188 is a glycosylation site (N-linked (GlcNAc...) asparagine). The helical transmembrane segment at leucine 191 to threonine 216 threads the bilayer. Position 199 (lysine 199) interacts with angiotensin II. Topologically, residues leucine 217–phenylalanine 239 are cytoplasmic. A helical membrane pass occupies residues lysine 240–leucine 268. At glycine 269–aspartate 278 the chain is on the extracellular side. Residues isoleucine 279–phenylalanine 304 form a helical membrane-spanning segment. The Cytoplasmic portion of the chain corresponds to leucine 305–glutamate 359. A compositionally biased stretch (polar residues) spans serine 335–lysine 350. Residues serine 335–glutamate 359 form a disordered region. Cysteine 355 carries the S-palmitoyl cysteine lipid modification.

Belongs to the G-protein coupled receptor 1 family. As to quaternary structure, interacts with MAS1. Interacts with ARRB1. Interacts with FLNA (via filamin repeat 21); increases PKA-mediated phosphorylation of FLNA. In terms of processing, C-terminal Ser or Thr residues may be phosphorylated.

The protein localises to the cell membrane. Receptor for angiotensin II, a vasoconstricting peptide, which acts as a key regulator of blood pressure and sodium retention by the kidney. The activated receptor in turn couples to G-alpha proteins G(q) (GNAQ, GNA11, GNA14 or GNA15) and thus activates phospholipase C and increases the cytosolic Ca(2+) concentrations, which in turn triggers cellular responses such as stimulation of protein kinase C. The protein is Type-1 angiotensin II receptor (AGTR1) of Ovis aries (Sheep).